A 172-amino-acid chain; its full sequence is Ribosome maturation factor RimM (172 aa).

The PRC barrel domain maps to 96–168; that stretch reads DGEFYYHEII…RVQVELMEGL (73 aa).

It belongs to the RimM family. Binds ribosomal protein uS19.

The protein localises to the cytoplasm. Its function is as follows. An accessory protein needed during the final step in the assembly of 30S ribosomal subunit, possibly for assembly of the head region. Essential for efficient processing of 16S rRNA. May be needed both before and after RbfA during the maturation of 16S rRNA. It has affinity for free ribosomal 30S subunits but not for 70S ribosomes. The chain is Ribosome maturation factor RimM from Streptococcus agalactiae serotype Ia (strain ATCC 27591 / A909 / CDC SS700).